The following is a 427-amino-acid chain: MSAFVVLGAQWGDEGKGKMTDYLAETADVVVRFQGGNNAGHTVVVGDKEYKLHLVPSGILYEDKINVLGNGVVIDPKALFEEINYLEDLGVKVTKEKLKVSDRAQLIMPYHRILDGLKEKARGKNDIGTTGKGIGPAYTDKAERSGIRVCDLMHKDVFEEKLRQNINDKNELIRLYGGEELDFDKIFEEYNAYADRMRPYVTDISVIIYDEMKKNKNVLFEGAQGSLLDIDYGTYPYVTSSSTVAGGVCTGAGVGPTAITGAVGIAKAYTTRVGKGPFPTELLDEMGEKLREKGHEYGVTTGRARRCGWLDLVILKSTARISGLTSFVVTKIDTLAGFDKIKVCTGYEFDGKVIDYFPASLEDLAKCKPVYEEFDGWDDSIADARSYEELPENAKIYLKKIEEFTDTKISIVSVGPKRDQTIVVGEI.

Residues glycine 12 to lysine 18 and glycine 40 to threonine 42 contribute to the GTP site. Catalysis depends on aspartate 13, which acts as the Proton acceptor. Mg(2+) is bound by residues aspartate 13 and glycine 40. Residues aspartate 13–lysine 16, asparagine 38–histidine 41, threonine 130, arginine 144, glutamine 224, threonine 239, and arginine 303 contribute to the IMP site. The active-site Proton donor is the histidine 41. Valine 299 to arginine 305 lines the substrate pocket. GTP is bound by residues arginine 305, lysine 331–aspartate 333, and serine 413–glycine 415.

This sequence belongs to the adenylosuccinate synthetase family. In terms of assembly, homodimer. Mg(2+) serves as cofactor.

The protein localises to the cytoplasm. It catalyses the reaction IMP + L-aspartate + GTP = N(6)-(1,2-dicarboxyethyl)-AMP + GDP + phosphate + 2 H(+). The protein operates within purine metabolism; AMP biosynthesis via de novo pathway; AMP from IMP: step 1/2. In terms of biological role, plays an important role in the de novo pathway of purine nucleotide biosynthesis. Catalyzes the first committed step in the biosynthesis of AMP from IMP. This Clostridium novyi (strain NT) protein is Adenylosuccinate synthetase.